Consider the following 628-residue polypeptide: Voltage-gated potassium channel KCNC4 (628 aa).

2 disordered regions span residues 1–24 and 62–88; these read MISS…SKTC and LAWL…GSSG. The segment at 1 to 28 is inactivation gate; sequence MISSVCVSSYRGRKSGNKPPSKTCLKEE. At 1–230 the chain is on the cytoplasmic side; sequence MISSVCVSSY…EDPYSSRAAR (230 aa). Residues Ser8, Ser9, Ser15, and Ser21 each carry the phosphoserine modification. Residues 77-88 show a composition bias toward gly residues; sequence DGGGAGSSGSSG. The Zn(2+) site is built by His120, Cys126, Cys147, and Cys148. A helical membrane pass occupies residues 231-251; the sequence is VVAFASLFFILVSITTFCLET. 2 N-linked (GlcNAc...) asparagine glycosylation sites follow: Asn260 and Asn269. A helical transmembrane segment spans residues 282 to 302; the sequence is EPILTYIEGVCVMWFTLEFLV. The Cytoplasmic portion of the chain corresponds to 303–316; it reads RIVCCPDTLDFVKN. Residues 317–337 form a helical membrane-spanning segment; sequence LLNIIDFVAILPFYLEVGLSG. Residues 349-368 form a helical; Voltage-sensor membrane-spanning segment; that stretch reads FLRVVRFVRILRIFKLTRHF. Topologically, residues 369 to 384 are cytoplasmic; it reads VGLRVLGHTLRASTNE. Residues 385–405 form a helical membrane-spanning segment; sequence FLLLIIFLALGVLIFATMIYY. Thr440, Leu441, Gly442, and Tyr443 together coordinate K(+). A Selectivity filter motif is present at residues 440–445; sequence TLGYGD. A helical membrane pass occupies residues 456 to 476; sequence VGALCALAGVLTIAMPVPVIV. Topologically, residues 477–628 are cytoplasmic; the sequence is NNFGMYYSLA…CVPVSHTCAL (152 aa). The disordered stretch occupies residues 493 to 584; sequence PKKRKKHVPR…RRALRRSGTR (92 aa). A compositionally biased stretch (basic and acidic residues) spans 531–546; it reads AREEGVVERKRADSKQ.

It belongs to the potassium channel family. C (Shaw) (TC 1.A.1.2) subfamily. Kv3.4/KCNC4 sub-subfamily. Homotetramer. Heterotetramer of potassium channel proteins. Phosphorylation of serine residues in the inactivation gate inhibits rapid channel closure.

The protein localises to the membrane. It carries out the reaction K(+)(in) = K(+)(out). Functionally, voltage-gated potassium channel that opens in response to the voltage difference across the membrane, forming a potassium-selective channel through which potassium ions pass in accordance with their electrochemical gradient. The channel displays rapid activation and inactivation kinetics. The protein is Voltage-gated potassium channel KCNC4 of Mus musculus (Mouse).